Consider the following 547-residue polypeptide: Methionine--tRNA ligase (547 aa).

The 'HIGH' region motif lies at 15–25 (PYANGSLHLGH). C146, C149, C159, and C162 together coordinate Zn(2+). The 'KMSKS' region motif lies at 332 to 336 (KMSKS). K335 contributes to the ATP binding site.

Belongs to the class-I aminoacyl-tRNA synthetase family. MetG type 1 subfamily. As to quaternary structure, monomer. Requires Zn(2+) as cofactor.

Its subcellular location is the cytoplasm. The catalysed reaction is tRNA(Met) + L-methionine + ATP = L-methionyl-tRNA(Met) + AMP + diphosphate. Is required not only for elongation of protein synthesis but also for the initiation of all mRNA translation through initiator tRNA(fMet) aminoacylation. The chain is Methionine--tRNA ligase from Baumannia cicadellinicola subsp. Homalodisca coagulata.